We begin with the raw amino-acid sequence, 247 residues long: Probable transcriptional regulatory protein SynWH7803_1972 (247 aa).

Belongs to the TACO1 family.

Its subcellular location is the cytoplasm. This chain is Probable transcriptional regulatory protein SynWH7803_1972, found in Synechococcus sp. (strain WH7803).